A 252-amino-acid polypeptide reads, in one-letter code: MSQAAKASASATVAVNPGPDTKGKGAPPAGTSPSPGTTLAPTTVPITSAKAAELPPGNYRLVVFELENFQGRRAEFSGECSNLADRGFDRVRSIIVSAGPWVAFEQSNFRGEMFILEKGEYPRWNTWSSSYRSDRLMSFRPIKMDAQEHKISLFEGANFKGNTIEIQGDDAPSLWVYGFSDRVGSVKVSSGTWVGYQYPGYRGYQYLLEPGDFRHWNEWGAFQPQMQSLRRLRDKQWHLEGSFPVLATEPPK.

2 stretches are compositionally biased toward low complexity: residues 1–15 (MSQA…TVAV) and 24–37 (KGAP…SPGT). Positions 1 to 42 (MSQAAKASASATVAVNPGPDTKGKGAPPAGTSPSPGTTLAPT) are disordered. Ser-2 bears the N-acetylserine mark. The tract at residues 2–58 (SQAAKASASATVAVNPGPDTKGKGAPPAGTSPSPGTTLAPTTVPITSAKAAELPPGN) is N-terminal arm. 2 Beta/gamma crystallin 'Greek key' domains span residues 59 to 98 (YRLV…IVSA) and 99 to 143 (GPWV…RPIK). The segment at 144–148 (MDAQE) is connecting peptide. Beta/gamma crystallin 'Greek key' domains are found at residues 149-190 (HKIS…KVSS) and 191-233 (GTWV…RRLR). The C-terminal arm stretch occupies residues 235–252 (KQWHLEGSFPVLATEPPK).

The protein belongs to the beta/gamma-crystallin family. As to quaternary structure, homo/heterodimer, or complexes of higher-order. The structure of beta-crystallin oligomers seems to be stabilized through interactions between the N-terminal arms. Post-translationally, specific cleavages in the N-terminal arm occur during lens maturation and give rise to truncated forms, leading to impaired oligomerization and protein insolubilization.

Crystallins are the dominant structural components of the vertebrate eye lens. This is Beta-crystallin B1 (CRYBB1) from Homo sapiens (Human).